Consider the following 349-residue polypeptide: GTP 3',8-cyclase (349 aa).

One can recognise a Radical SAM core domain in the interval 24-249; the sequence is PFGRAITYLR…VDSDYQTGGP (226 aa). GTP is bound at residue Arg33. [4Fe-4S] cluster contacts are provided by Cys40 and Cys44. Tyr46 provides a ligand contact to S-adenosyl-L-methionine. Cys47 contributes to the [4Fe-4S] cluster binding site. Arg82 is a GTP binding site. Gly86 serves as a coordination point for S-adenosyl-L-methionine. GTP is bound at residue Thr116. Position 140 (Ser140) interacts with S-adenosyl-L-methionine. Position 176 (Lys176) interacts with GTP. Position 210 (Met210) interacts with S-adenosyl-L-methionine. Cys273 and Cys276 together coordinate [4Fe-4S] cluster. Residue 278-280 coordinates GTP; that stretch reads RVR. Residue Cys290 coordinates [4Fe-4S] cluster.

This sequence belongs to the radical SAM superfamily. MoaA family. As to quaternary structure, monomer and homodimer. Requires [4Fe-4S] cluster as cofactor.

The catalysed reaction is GTP + AH2 + S-adenosyl-L-methionine = (8S)-3',8-cyclo-7,8-dihydroguanosine 5'-triphosphate + 5'-deoxyadenosine + L-methionine + A + H(+). It functions in the pathway cofactor biosynthesis; molybdopterin biosynthesis. In terms of biological role, catalyzes the cyclization of GTP to (8S)-3',8-cyclo-7,8-dihydroguanosine 5'-triphosphate. This Agrobacterium fabrum (strain C58 / ATCC 33970) (Agrobacterium tumefaciens (strain C58)) protein is GTP 3',8-cyclase.